The primary structure comprises 717 residues: Choline transporter-like protein 5 (717 aa).

The tract at residues 1-24 is disordered; it reads MNDTEKPADTASEEEDFGDPRTYD. The Cytoplasmic portion of the chain corresponds to 1 to 38; it reads MNDTEKPADTASEEEDFGDPRTYDPDFKGPVSNRSCTD. A helical transmembrane segment spans residues 39 to 59; that stretch reads VLCCMIFLLCIVGYIVLGLVA. The Extracellular portion of the chain corresponds to 60–242; that stretch reads WVHGDPRRAA…KVFEDYATTW (183 aa). N-linked (GlcNAc...) asparagine glycans are attached at residues Asn-88 and Asn-190. Residues 243 to 263 form a helical membrane-spanning segment; the sequence is YWILIGLMIAMVLSWIFLILL. The Cytoplasmic portion of the chain corresponds to 264 to 265; sequence RF. The chain crosses the membrane as a helical span at residues 266-286; it reads IAGCLFWVFMIGVIGIIGYGI. Residues 287–325 are Extracellular-facing; the sequence is WHCYQQYTNLQEHPRSVLTVYDIGIQTNISMYFELQQTW. A glycan (N-linked (GlcNAc...) asparagine) is linked at Asn-314. The helical transmembrane segment at 326 to 346 threads the bilayer; the sequence is FTLMIILCIIEVIVILMLIFL. The Cytoplasmic portion of the chain corresponds to 347–351; that stretch reads RNRIR. The helical transmembrane segment at 352–372 threads the bilayer; it reads VAIILLKEGSKAIGYVPSTLV. The Extracellular segment spans residues 373–374; the sequence is YP. Residues 375 to 395 form a helical membrane-spanning segment; sequence ALTFILLSICICYWVVTAVFL. At 396 to 460 the chain is on the cytoplasmic side; the sequence is ATSGVPVYKV…QYIPTFHVYN (65 aa). The helical transmembrane segment at 461–481 threads the bilayer; sequence LFVFLWLINFVIALGQCALAG. Over 482-515 the chain is Extracellular; that stretch reads AFATYYWAMKKPDDIPRYPLFTAFGRAIRYHTGS. The helical transmembrane segment at 516 to 536 threads the bilayer; that stretch reads LAFGSLIIALIQMFKIVLEYL. Residues 537-610 are Cytoplasmic-facing; it reads NHRLKRTENT…KVAVTDEVTY (74 aa). The chain crosses the membrane as a helical span at residues 611 to 631; sequence FVLFLGKILVAGSIGVLAFLF. Residues 632-649 lie on the Extracellular side of the membrane; it reads FTQRLPVIAQGPASLNYY. The helical transmembrane segment at 650–670 threads the bilayer; the sequence is WVPLLTVILGSYLIAHGFFSV. Topologically, residues 671 to 717 are cytoplasmic; sequence YAMCVETIFICFLEDLERNDGSTARPYYVSQPLLKIFQEENLQTKQQ.

It belongs to the CTL (choline transporter-like) family.

It is found in the cell membrane. The catalysed reaction is choline(out) + n H(+)(in) = choline(in) + n H(+)(out). Its function is as follows. Choline/H+ antiporter. The chain is Choline transporter-like protein 5 (SLC44A5) from Macaca fascicularis (Crab-eating macaque).